The sequence spans 565 residues: NAD-dependent malic enzyme (565 aa).

The active-site Proton donor is Tyr104. Arg157 serves as a coordination point for NAD(+). Lys175 functions as the Proton acceptor in the catalytic mechanism. Glu246, Asp247, and Asp270 together coordinate a divalent metal cation. Residues Asp270 and Asn418 each contribute to the NAD(+) site.

Belongs to the malic enzymes family. In terms of assembly, homotetramer. It depends on Mg(2+) as a cofactor. Mn(2+) is required as a cofactor.

The enzyme catalyses (S)-malate + NAD(+) = pyruvate + CO2 + NADH. It catalyses the reaction oxaloacetate + H(+) = pyruvate + CO2. In Escherichia coli O9:H4 (strain HS), this protein is NAD-dependent malic enzyme.